The following is a 128-amino-acid chain: Small ribosomal subunit protein uS9 (128 aa).

Positions 106–128 are disordered; the sequence is SRKVERKKPGRPKARKKFQFSKR. The span at 109–128 shows a compositional bias: basic residues; the sequence is VERKKPGRPKARKKFQFSKR.

Belongs to the universal ribosomal protein uS9 family.

This Azobacteroides pseudotrichonymphae genomovar. CFP2 protein is Small ribosomal subunit protein uS9.